Consider the following 268-residue polypeptide: Aliphatic sulfonates import ATP-binding protein SsuB 3 (268 aa).

Positions 1 to 27 are disordered; sequence MTAAEAPLPPLAPRERTATTAAERRTG. Over residues 13-26 the composition is skewed to basic and acidic residues; it reads PRERTATTAAERRT. Residues 32-247 form the ABC transporter domain; sequence VSLSGVRKSF…DRNDPEALRY (216 aa). 64–71 contacts ATP; that stretch reads GPSGTGKT.

The protein belongs to the ABC transporter superfamily. Aliphatic sulfonates importer (TC 3.A.1.17.2) family. The complex is composed of two ATP-binding proteins (SsuB), two transmembrane proteins (SsuC) and a solute-binding protein (SsuA).

It localises to the cell membrane. It carries out the reaction ATP + H2O + aliphatic sulfonate-[sulfonate-binding protein]Side 1 = ADP + phosphate + aliphatic sulfonateSide 2 + [sulfonate-binding protein]Side 1.. Functionally, part of the ABC transporter complex SsuABC involved in aliphatic sulfonates import. Responsible for energy coupling to the transport system. The polypeptide is Aliphatic sulfonates import ATP-binding protein SsuB 3 (Rhodococcus jostii (strain RHA1)).